Reading from the N-terminus, the 807-residue chain is Leucine-rich repeat-containing protein 41 (807 aa).

Residues 45–54 (ALFELCGRAV) form an interaction with Elongin BC complex region. Residues Ser-155, Ser-276, and Ser-326 each carry the phosphoserine modification. Disordered regions lie at residues 269–290 (ASRG…RRPR), 304–335 (TRRK…AIGG), and 349–403 (ASGT…GSGA). Residue Thr-327 is modified to Phosphothreonine. Residues 352–381 (TKQPSAPAAASASSSTSSKRAPASSASQPK) are compositionally biased toward low complexity. Residue Ser-368 is modified to Phosphoserine. Basic residues predominate over residues 382–396 (PLKRFKRAAGKKGPR). LRR repeat units follow at residues 482-502 (WVSL…IFRL), 513-525 (AGCR…LSDL), 526-550 (FSPL…VLSI), 608-632 (SGSL…LVLQ), 638-661 (NLSL…VLFL), 696-723 (NSTL…VFSE), and 726-747 (SSSL…LLEF).

In terms of assembly, part of an E3 ubiquitin-protein ligase complex with Elongin BC (ELOB and ELOC), RBX1 and CUL5. Component of a probable ECS(LRRC41) complex which contains CUL5, RNF7/RBX2, Elongin BC and LRRC41. Interacts with CUL5, RNF7, ELOB and ELOC.

It participates in protein modification; protein ubiquitination. In terms of biological role, probable substrate recognition component of an ECS (Elongin BC-CUL2/5-SOCS-box protein) E3 ubiquitin ligase complex which mediates the ubiquitination and subsequent proteasomal degradation of target proteins. This Mus musculus (Mouse) protein is Leucine-rich repeat-containing protein 41 (Lrrc41).